A 259-amino-acid chain; its full sequence is Polycomb group RING finger protein 1 (259 aa).

The RING-type zinc finger occupies 45–84; that stretch reads CYLCAGYFIDATTITECLHTFCKSCIVKYLQTSKYCPLCN.

In terms of assembly, component of a PRC1-like complex.

It is found in the nucleus. Component of a Polycomb group (PcG) multiprotein PRC1-like complex, a complex class required to maintain the transcriptionally repressive state of many genes, including Hox genes, throughout development. PcG PRC1 complex acts via chromatin remodeling and modification of histones; it mediates monoubiquitination of histone H2A 'Lys-119', rendering chromatin heritably changed in its expressibility. The protein is Polycomb group RING finger protein 1 (pcgf1) of Xenopus tropicalis (Western clawed frog).